The primary structure comprises 649 residues: Ubiquitin-associated and SH3 domain-containing protein B (649 aa).

A Phosphoserine modification is found at S20. T23 is subject to Phosphothreonine. The region spanning 27-76 (NRQQRPGTIKHGSALDVLLSMGFPRARAQKALASTGGRSVQAACDWLFSH) is the UBA domain. The SH3 domain occupies 254–319 (ANHETLQVIY…PENYITKADE (66 aa)). The tract at residues 380 to 649 (GPQKRCLFVC…FNWRETLLQE (270 aa)) is protein tyrosine phosphatase. The active site involves R390. H391 serves as the catalytic Tele-phosphohistidine intermediate. H576 is a catalytic residue.

In terms of assembly, homodimer. Interacts with JAK2 (in vitro). Interacts with CBL. Part of a complex containing CBL and activated EGFR. Interacts with ubiquitin and with mono-ubiquitinated proteins. Interacts with ZAP70 (ubiquitinated form).

The protein resides in the cytoplasm. It is found in the nucleus. It carries out the reaction O-phospho-L-tyrosyl-[protein] + H2O = L-tyrosyl-[protein] + phosphate. In terms of biological role, interferes with CBL-mediated down-regulation and degradation of receptor-type tyrosine kinases. Promotes accumulation of activated target receptors, such as T-cell receptors and EGFR, on the cell surface. Exhibits tyrosine phosphatase activity toward several substrates including EGFR, FAK, SYK, and ZAP70. Down-regulates proteins that are dually modified by both protein tyrosine phosphorylation and ubiquitination. This is Ubiquitin-associated and SH3 domain-containing protein B (UBASH3B) from Homo sapiens (Human).